The chain runs to 146 residues: Hemoglobin subunit beta (146 aa).

Alanine 1 carries the post-translational modification N-acetylalanine. One can recognise a Globin domain in the interval 2-146; it reads SFDPHEKQLI…VAAALAAEYH (145 aa). Heme b contacts are provided by histidine 63 and histidine 92.

Belongs to the globin family. As to quaternary structure, heterotetramer of two alpha chains and two beta chains. As to expression, red blood cells.

Its function is as follows. Involved in oxygen transport from the lung to the various peripheral tissues. This Crocodylus niloticus (Nile crocodile) protein is Hemoglobin subunit beta (HBB).